The sequence spans 87 residues: Cuticle protein 1 (87 aa).

Pyrrolidone carboxylic acid is present on glutamine 1. A run of 3 repeats spans residues 5–20, 43–58, and 71–86. Cystine bridges form between cysteine 14/cysteine 20, cysteine 52/cysteine 58, and cysteine 80/cysteine 86.

This Blaberus craniifer (Death's head cockroach) protein is Cuticle protein 1.